We begin with the raw amino-acid sequence, 214 residues long: cAMP-activated global transcriptional regulator Vfr (214 aa).

Residues 59 to 60 (RE), 73 to 75 (GEL), 87 to 88 (RS), 132 to 133 (TT), R179, and R185 each bind 3',5'-cyclic AMP. Positions 142-214 (LDVTGRVART…GKTMVVFGTR (73 aa)) constitute an HTH crp-type domain. Residues 174–193 (RQEIGRIVGCSREMVGRVLK) constitute a DNA-binding region (H-T-H motif).

In terms of assembly, homodimer.

Global cAMP-dependent transcriptional regulator that controls virulence gene expression by distinct cAMP-dependent and -independent mechanisms, which allow to fine tune its virulence program in response to specific host cues or environments. Controls the expression of many regulatory targets including type II, type III and type IV secretion systems, flagellar-mediated motility, and quorum sensing systems. Transcriptional control is exerted by binding to a well-characterized consensus site (5'-ANWWTGNGAWNYAGWTCACAT) within target promoters. Directly binds to the toxA upstream region to regulate exotoxin A production, to the lasR gene promoter to activate the las quorum-sensing system or to the exsA promoter to regulate type III secretion system. Autoregulates as well its own expression. The sequence is that of cAMP-activated global transcriptional regulator Vfr (vfr) from Pseudomonas aeruginosa (strain ATCC 15692 / DSM 22644 / CIP 104116 / JCM 14847 / LMG 12228 / 1C / PRS 101 / PAO1).